Consider the following 1373-residue polypeptide: DNA-directed RNA polymerase subunit beta (1373 aa).

It belongs to the RNA polymerase beta chain family. As to quaternary structure, the RNAP catalytic core consists of 2 alpha, 1 beta, 1 beta' and 1 omega subunit. When a sigma factor is associated with the core the holoenzyme is formed, which can initiate transcription.

It catalyses the reaction RNA(n) + a ribonucleoside 5'-triphosphate = RNA(n+1) + diphosphate. In terms of biological role, DNA-dependent RNA polymerase catalyzes the transcription of DNA into RNA using the four ribonucleoside triphosphates as substrates. This is DNA-directed RNA polymerase subunit beta from Rickettsia felis (strain ATCC VR-1525 / URRWXCal2) (Rickettsia azadi).